Reading from the N-terminus, the 945-residue chain is Microtubule cross-linking factor 3 (945 aa).

Low complexity-rich tracts occupy residues 1–23, 72–93, and 110–126; these read MSQPPSGGAAPAATSASAAAAAT, QQQLQQQQQQGNKITGRSTSGT, and PKGAVPGAVQPAPGAEG. Residues 1–25 form the signal peptide; sequence MSQPPSGGAAPAATSASAAAAATEA. 4 disordered regions span residues 1–250, 265–293, 307–366, and 494–522; these read MSQP…SYWK, KERAAAAAAAAQMHTKNGGGGSRSSPVAG, SPMA…TLKN, and LSLKRRGSKDLPKSEKKAQQTPTEDDNED. A compositionally biased stretch (basic and acidic residues) spans 141–151; that stretch reads GQPEEAPREIE. Over residues 164–179 the composition is skewed to gly residues; it reads GGVGGGGEGGGAGGGP. Residues 219-235 are compositionally biased toward low complexity; it reads TAATSKTPGPGSRNSGS. The segment covering 236–247 has biased composition (gly residues); sequence GSTGSGSGGGGS. Low complexity predominate over residues 328 to 345; the sequence is AMQAAAPPSSQPHSQQLQ. Residues 340 to 724 adopt a coiled-coil conformation; the sequence is HSQQLQEQED…GKVMQLQYEN (385 aa). Basic and acidic residues-rich tracts occupy residues 353 to 366 and 494 to 511; these read EMEKLREENETLKN and LSLKRRGSKDLPKSEKKA. At S567 the chain carries Phosphoserine. Residues 741–811 are disordered; sequence GIRGSPRDSD…PWPKSFSDRQ (71 aa). Residues 745 to 766 are compositionally biased toward basic and acidic residues; the sequence is SPRDSDAESDAGKKESDDDSRP. S779 is subject to Phosphoserine. Residues 809–833 are a coiled coil; it reads DRQQMKDIRSEAERLGKTIDRLIAD. The helical transmembrane segment at 913 to 933 threads the bilayer; that stretch reads PIILLILILVLFSSLSYTTIF.

This sequence belongs to the MTCL family.

It is found in the membrane. This chain is Microtubule cross-linking factor 3 (Mtcl3), found in Mus musculus (Mouse).